The sequence spans 486 residues: Aspartyl/glutamyl-tRNA(Asn/Gln) amidotransferase subunit B (486 aa).

Belongs to the GatB/GatE family. GatB subfamily. As to quaternary structure, heterotrimer of A, B and C subunits.

It carries out the reaction L-glutamyl-tRNA(Gln) + L-glutamine + ATP + H2O = L-glutaminyl-tRNA(Gln) + L-glutamate + ADP + phosphate + H(+). The catalysed reaction is L-aspartyl-tRNA(Asn) + L-glutamine + ATP + H2O = L-asparaginyl-tRNA(Asn) + L-glutamate + ADP + phosphate + 2 H(+). Functionally, allows the formation of correctly charged Asn-tRNA(Asn) or Gln-tRNA(Gln) through the transamidation of misacylated Asp-tRNA(Asn) or Glu-tRNA(Gln) in organisms which lack either or both of asparaginyl-tRNA or glutaminyl-tRNA synthetases. The reaction takes place in the presence of glutamine and ATP through an activated phospho-Asp-tRNA(Asn) or phospho-Glu-tRNA(Gln). This chain is Aspartyl/glutamyl-tRNA(Asn/Gln) amidotransferase subunit B, found in Leptospira borgpetersenii serovar Hardjo-bovis (strain JB197).